Reading from the N-terminus, the 330-residue chain is Aspartate--ammonia ligase (330 aa).

It belongs to the class-II aminoacyl-tRNA synthetase family. AsnA subfamily.

Its subcellular location is the cytoplasm. The catalysed reaction is L-aspartate + NH4(+) + ATP = L-asparagine + AMP + diphosphate + H(+). The protein operates within amino-acid biosynthesis; L-asparagine biosynthesis; L-asparagine from L-aspartate (ammonia route): step 1/1. In Escherichia coli O8 (strain IAI1), this protein is Aspartate--ammonia ligase.